The primary structure comprises 369 residues: Dehydrogenase pigH (369 aa).

The region spanning 13 to 367 (KAPLLEVKAA…QGVSAKKIVV (355 aa)) is the Enoyl reductase (ER) domain. NADP(+) is bound at residue 44-49 (IDWLIQ). 2 N-linked (GlcNAc...) asparagine glycosylation sites follow: Asn79 and Asn101. Residues 197–200 (SRKN) and Tyr215 each bind NADP(+). Residues 280 to 300 (TIIFFVSWIISFKFKGLLKGI) traverse the membrane as a helical segment. Residue 360-361 (VS) participates in NADP(+) binding.

The protein belongs to the zinc-containing alcohol dehydrogenase family.

It is found in the membrane. The protein operates within secondary metabolite biosynthesis. In terms of biological role, dehydrogenase; part of the gene cluster that mediates the biosynthesis of azaphilone pigments (MonAzPs), a complex mixture of compounds with a common azaphilone skeleton very widely used as food colorants. Within the pathway, pigH might be involved in the late steps of yellow pigments monascin and ankaflavin biosynthesis. The first step of the pathway is performed by the nrPKS pigA that forms the hexaketide precursor from successive condensations of five malonyl-CoA units, with a simple acetyl-CoA starter unit. The role of esterase pigG is not clear, but it may play at most a supplementary role in the formation of the benzaldehyde produced by the pigA nrPKS. This very reactive benzaldehyde is intercepted by the pigC ketoreductase that to provide the first stable enzyme-free MonAzPs intermediate, 6-(4-hydroxy-2-oxopentyl)-3-methyl-2,4-dioxocyclohexane carbaldehyde, also known as M7PKS-1. The FAD-dependent monooxygenase pigN hydroxylates M7PKS-1 at C-4, which triggers the formation of the pyran ring. PigJ, pigK and pigD are involved in the acetylation of the pyran ring. PigJ and pigK form the two subunits of a dedicated fungal FAS that produces the side chain fatty acyl moiety of MonAzPs and pigD transfers the fatty acyl chain to the C-4 alcohol. PigM and pigO are involved in the elimination of the omega-1 alcohol. PigM acts as an O-acetyltransferase that synthesizes the putative O-11 acetyl intermediate whereas pigO eliminates acetic acid to yield an intermediate with a C10(11) double bond. The dehydration of the C-11 alcohol followed by the reduction of the C6(7) double bond by the NAD(P)H-dependent oxidoreductase pigE increases the electrophilicity of the C-5 ketone of the resulting acyl benzopyran. This in turn sets up the C-5 ketone for an intramolecular Knoevenagel aldol condensation with the C-20 enol of the side chain. This condensation affords the characteristic linear tricyclic carbon skeletons of the yellow pigments that serve as the common precursors for the classical yellow pigments monascin and ankaflavin, orange pigments rubopunctatin and monascorubrin, and red pigments ribropunctamine and monascorubramine. The FAD-dependent oxidoreductase pigF is especially invoved in the biosynthesis of orange and red pigments via desaturation of C6(7). In Monascus ruber (Mold), this protein is Dehydrogenase pigH.